A 539-amino-acid chain; its full sequence is Carboxypeptidase Y homolog A (539 aa).

Residues 1–17 form the signal peptide; it reads MKALTATLLVGTALAAV. Positions 18–122 are excised as a propeptide; that stretch reads PPQQPIQVPT…KLEKYDLRVK (105 aa). Disulfide bonds link Cys-176–Cys-416, Cys-310–Cys-324, Cys-334–Cys-357, Cys-341–Cys-350, and Cys-379–Cys-386. An N-linked (GlcNAc...) asparagine glycan is attached at Asn-207. Residue Ser-263 is part of the active site. Asp-455 is a catalytic residue. An N-linked (GlcNAc...) asparagine glycan is attached at Asn-506. His-517 is an active-site residue.

Belongs to the peptidase S10 family.

It localises to the vacuole. The enzyme catalyses Release of a C-terminal amino acid with broad specificity.. In terms of biological role, vacuolar carboxypeptidase involved in degradation of small peptides. Digests preferentially peptides containing an aliphatic or hydrophobic residue in P1' position, as well as methionine, leucine or phenylalanine in P1 position of ester substrate. This chain is Carboxypeptidase Y homolog A (cpyA), found in Coccidioides posadasii (strain C735) (Valley fever fungus).